We begin with the raw amino-acid sequence, 533 residues long: Probable protein kinase UbiB (533 aa).

A helical membrane pass occupies residues 24–44; it reads LILELPMLPWWLRLLGATLPW. One can recognise a Protein kinase domain in the interval 126-494; sequence RFEREPLASA…WKGSRHDWLG (369 aa). ATP is bound by residues 132–140 and lysine 154; that span reads LASASVAQV. The active-site Proton acceptor is the aspartate 289. Residues 510-530 form a helical membrane-spanning segment; sequence LGQQLEAWPAWVMLAGGVFLI.

It belongs to the ABC1 family. UbiB subfamily.

The protein localises to the cell inner membrane. It functions in the pathway cofactor biosynthesis; ubiquinone biosynthesis [regulation]. Functionally, is probably a protein kinase regulator of UbiI activity which is involved in aerobic coenzyme Q (ubiquinone) biosynthesis. This is Probable protein kinase UbiB from Pseudomonas aeruginosa (strain LESB58).